A 50-amino-acid polypeptide reads, in one-letter code: Temporin-SHa (50 aa).

The signal sequence occupies residues 1-10 (FLGTINLSLC). The propeptide occupies 11 to 35 (EQERDADEEERRDEPNESNVEVEKR). A Phenylalanine amide modification is found at Phe-48.

This sequence belongs to the frog skin active peptide (FSAP) family. Temporin subfamily. In terms of tissue distribution, expressed by the skin glands.

The protein localises to the secreted. It is found in the target cell membrane. Its function is as follows. Amphipathic alpha-helical antimicrobial peptide with highly potent activity against Gram-positive bacteria, and potent activity Gram-negative bacteria and fungi (MIC=2-30 uM). Acts through membranolytic mechanism involving rapid membrane permeabilization and depolarization. Shows a direct extra-cellular antiviral activity probably through degradation of the viral envelope. Also shows a weak indirect antiviral activity by inhibiting virus replication. Also displays anti-trypanosoma and anti-leishmania (prosmastigotes and axenic amastigotes) activity through membranolytic mechanism. Also induces apoptosis in leishmania promastigotes at high peptide concentrations. Shows moderate hemolytic activity (LC(50)=25 uM). In contrast to many antibiotics, this peptide does not induce bacterial resistance. This is Temporin-SHa from Pelophylax saharicus (Sahara frog).